An 879-amino-acid polypeptide reads, in one-letter code: Translation initiation factor IF-2 (879 aa).

The tract at residues glutamate 48–arginine 261 is disordered. Over residues proline 82–alanine 111 the composition is skewed to low complexity. Pro residues-rich tracts occupy residues proline 119–proline 142, serine 152–valine 163, and proline 173–proline 197. Over residues alanine 198–proline 213 the composition is skewed to low complexity. Over residues proline 228–proline 246 the composition is skewed to gly residues. Residues serine 251–arginine 260 are compositionally biased toward basic residues. Residues proline 372–leucine 543 form the tr-type G domain. The tract at residues glycine 381–threonine 388 is G1. Glycine 381–threonine 388 lines the GTP pocket. The tract at residues glycine 406 to histidine 410 is G2. Positions aspartate 431–glycine 434 are G3. GTP-binding positions include aspartate 431–histidine 435 and asparagine 485–aspartate 488. Positions asparagine 485–aspartate 488 are G4. Residues serine 521–leucine 523 are G5.

It belongs to the TRAFAC class translation factor GTPase superfamily. Classic translation factor GTPase family. IF-2 subfamily.

It localises to the cytoplasm. In terms of biological role, one of the essential components for the initiation of protein synthesis. Protects formylmethionyl-tRNA from spontaneous hydrolysis and promotes its binding to the 30S ribosomal subunits. Also involved in the hydrolysis of GTP during the formation of the 70S ribosomal complex. In Acidothermus cellulolyticus (strain ATCC 43068 / DSM 8971 / 11B), this protein is Translation initiation factor IF-2.